The primary structure comprises 491 residues: CRM-domain containing factor CFM9, mitochondrial (491 aa).

Residues 1 to 25 constitute a mitochondrion transit peptide; sequence MNQVFKGWSRGMSTSRGRSMRSKVE. The interval 1–34 is disordered; the sequence is MNQVFKGWSRGMSTSRGRSMRSKVESRMRKESGK. Over residues 22–34 the composition is skewed to basic and acidic residues; that stretch reads SKVESRMRKESGK. One can recognise a CRM domain in the interval 90–187; it reads ELFTSEQVQA…RNYRQPKNLI (98 aa). Residues 255 to 265 are compositionally biased toward basic and acidic residues; sequence PYVFHGDKQSE. Disordered regions lie at residues 255-287 and 328-491; these read PYVF…DQEE and RSRT…WDSD. Residues 277–287 are compositionally biased toward acidic residues; sequence EPGDEDSDQEE. A compositionally biased stretch (basic and acidic residues) spans 345 to 359; sequence RRNDRDTHSQRRPND. Acidic residues predominate over residues 360 to 375; it reads SDDDDDDGELDSEDDE. Residues 392-416 are compositionally biased toward basic and acidic residues; that stretch reads RPREDFKRRSPDPRPRPRAQVRSDD. The span at 453–478 shows a compositional bias: polar residues; it reads TVSASSSKQSRFRNNSSRDGINNSKS.

Highly expressed in roots and meristemic regions of young seedlings. Expressed at low levels in stems, trichomes and stigma.

It localises to the mitochondrion. In terms of biological role, involved in the splicing of group II introns in mitochondria. Required for the splicing of mitochondrial introns found in nad1, nad2, nad4, nad5, nad7, rps3 and cox2 genes. Splicing of mitochondrial introns is crucial for mitochondrial biogenesis and function, plant growth and development, and plant response to abiotic stresses. This chain is CRM-domain containing factor CFM9, mitochondrial, found in Arabidopsis thaliana (Mouse-ear cress).